The primary structure comprises 119 residues: Large ribosomal subunit protein bL20 (119 aa).

The protein belongs to the bacterial ribosomal protein bL20 family.

Functionally, binds directly to 23S ribosomal RNA and is necessary for the in vitro assembly process of the 50S ribosomal subunit. It is not involved in the protein synthesizing functions of that subunit. This Halorhodospira halophila (strain DSM 244 / SL1) (Ectothiorhodospira halophila (strain DSM 244 / SL1)) protein is Large ribosomal subunit protein bL20.